A 586-amino-acid polypeptide reads, in one-letter code: Dynein axonemal assembly factor 3 (586 aa).

Residues 455 to 493 (PGGGDSAVESGPAPSKVESTRAPLPESISPPQANQAPSL) form a disordered region.

Belongs to the DNAAF3 family.

The protein localises to the cytoplasm. The protein resides in the dynein axonemal particle. Its function is as follows. Required for the assembly of axonemal inner and outer dynein arms. Involved in preassembly of dyneins into complexes before their transport into cilia. In Mus musculus (Mouse), this protein is Dynein axonemal assembly factor 3 (Dnaaf3).